A 246-amino-acid chain; its full sequence is Isoamyl acetate-hydrolyzing esterase (246 aa).

The active-site Nucleophile is Ser-46. The Proton donor role is filled by Asp-201. His-204 (proton acceptor) is an active-site residue.

This sequence belongs to the 'GDSL' lipolytic enzyme family. IAH1 subfamily.

It localises to the cytoplasm. The enzyme catalyses 3-methylbutyl acetate + H2O = 3-methylbutanol + acetate + H(+). This chain is Isoamyl acetate-hydrolyzing esterase (iah1), found in Schizosaccharomyces pombe (strain 972 / ATCC 24843) (Fission yeast).